The chain runs to 264 residues: MIQSKKLTLGICLVLLIILIVGYVIMTKTNGRNAQIKDTFNQTLKLYPTKNLDGFYDKEGFRDQEFKKGDKGTWIVNSEMVIEPKGKDMETRGMVLYINRNTRTTKGYYFISEMTDDSNGRPKDDEKRYPVKMEHNKIIPTKPLPNDKLKKEIENLKFFVQYGNFKDINDYKDGDISYNPNVPSYSAKYQLNNDDYNVQQLRKRYDIPTKQAPKLLLKGDGDLKGSSVGSKNIEFTFVENKEENIYFTDSVQYTPSEDTRYESN.

Residues leucine 7–threonine 27 form a helical membrane-spanning segment.

The protein belongs to the staphylococcal tandem lipoprotein family.

Its subcellular location is the cell membrane. This is an uncharacterized protein from Staphylococcus aureus (strain MRSA252).